A 414-amino-acid polypeptide reads, in one-letter code: Aspartic protease-like protein pynH (414 aa).

The N-terminal stretch at 1-19 (MFPCSRIWSLLVAAATASA) is a signal peptide. The region spanning 43–410 (FLTDIALGTP…DFEKLQVGIA (368 aa)) is the Peptidase A1 domain. 11 N-linked (GlcNAc...) asparagine glycosylation sites follow: Asn93, Asn102, Asn140, Asn151, Asn173, Asn202, Asn221, Asn258, Asn272, Asn335, and Asn366. Residues Cys333 and Cys371 are joined by a disulfide bond.

This sequence belongs to the peptidase A1 family.

The protein operates within secondary metabolite biosynthesis. Functionally, aspartic protease-like protein; part of the gene cluster that mediates the biosynthesis of pyranonigrins, a family of antioxidative compounds. The first step of pyranonigrins biosynthesis is performed by the hybrid PKS-NRPS synthetase that condenses 6 malonyl-CoA units to an acetyl starter unit, to form a 1,3,5-trioxotetradecane-6,8-dienyl-ACP. The enoyl reductase (ER) domain of pynA is likely to be functional during the first two rounds of polyketide chain extension, to generate the saturated C-C bonds of the alkyl side chain. PynA subsequently forms the amide bond between the acyl chain and L-serine. Although pynA has a terminal reductase domain, it appears to require the thioesterase pynI for the release of the straight-chain intermediate from pynA via the formation of a tetramic acid pyranonigrin J. The methyltransferase pynC then coverts pyranonigrin J to pyranonigrin I via N-methylation. The FAD-dependent monooxygenase pynG catalyzes an epoxidation-mediated cyclization to form the dihydro-gamma-pyrone moiety, followed by pynD-catalyzed oxidation of the alcohol to the ketone and enolization to yield the characteristic tetramic acid-fused gamma-pyrone core of pyranonigrin H. Pyranonigrin H is substrate of pynH for dehydration-mediated exo-methylene formation from the serine side chain to produce pyranonigrin E, before the oxidase pynE reduces the exo-methylene of pyranonigrin E into a pendant methyl to form pyranonigrin G. The FAD-linked oxidoreductase pynB performs the reverse reaction and converts pyranonigrin G back to pyranonigrin E. The polypeptide is Aspartic protease-like protein pynH (Aspergillus niger (strain ATCC MYA-4892 / CBS 513.88 / FGSC A1513)).